Reading from the N-terminus, the 364-residue chain is MAQQTPLYEQHTLCGARMVDFHGWMMPLHYGSQIDEHHEVRTDAGMFDVSHMTIVDLRGSRTREFLRYLLANDVAKLTKSGKALYSGMLNASGGVIDDLIVYYFTEDFFRLVVNSATREKDLSWITQHAEPFGIEITVRDDLSMIAVQGPNAQAKAATLFNDAQRQAVEGMKPFFGVQAGDLFIATTGYTGEAGYEIALPNEKAADFWRALVEGGVKPCGLGARDTLRLEAGMNLYGQEMDETISPLAANMGWTIAWEPADRDFIGREALEVQREHGTEKLVGLVMTEKGVLRNELPVRFTDAQGNQHEGIITSGTFSPTLGYSIALARVPKGIGETAIVQIRNREMPVKVTKPVFVRNGKAVA.

This sequence belongs to the GcvT family. In terms of assembly, the glycine cleavage system is composed of four proteins: P, T, L and H.

It carries out the reaction N(6)-[(R)-S(8)-aminomethyldihydrolipoyl]-L-lysyl-[protein] + (6S)-5,6,7,8-tetrahydrofolate = N(6)-[(R)-dihydrolipoyl]-L-lysyl-[protein] + (6R)-5,10-methylene-5,6,7,8-tetrahydrofolate + NH4(+). Its function is as follows. The glycine cleavage system catalyzes the degradation of glycine. The chain is Aminomethyltransferase from Escherichia coli O157:H7.